The following is a 356-amino-acid chain: UDP-N-acetylglucosamine--N-acetylmuramyl-(pentapeptide) pyrophosphoryl-undecaprenol N-acetylglucosamine transferase (356 aa).

The UDP-N-acetyl-alpha-D-glucosamine site is built by Arg-166, Ser-196, and Gln-290.

Belongs to the glycosyltransferase 28 family. MurG subfamily.

It localises to the cell membrane. It catalyses the reaction Mur2Ac(oyl-L-Ala-gamma-D-Glu-L-Lys-D-Ala-D-Ala)-di-trans,octa-cis-undecaprenyl diphosphate + UDP-N-acetyl-alpha-D-glucosamine = beta-D-GlcNAc-(1-&gt;4)-Mur2Ac(oyl-L-Ala-gamma-D-Glu-L-Lys-D-Ala-D-Ala)-di-trans,octa-cis-undecaprenyl diphosphate + UDP + H(+). It functions in the pathway cell wall biogenesis; peptidoglycan biosynthesis. Cell wall formation. Catalyzes the transfer of a GlcNAc subunit on undecaprenyl-pyrophosphoryl-MurNAc-pentapeptide (lipid intermediate I) to form undecaprenyl-pyrophosphoryl-MurNAc-(pentapeptide)GlcNAc (lipid intermediate II). The chain is UDP-N-acetylglucosamine--N-acetylmuramyl-(pentapeptide) pyrophosphoryl-undecaprenol N-acetylglucosamine transferase from Staphylococcus aureus (strain MRSA252).